We begin with the raw amino-acid sequence, 473 residues long: Photosystem II CP43 reaction center protein (473 aa).

The propeptide occupies 1–14; the sequence is MKILYSLRRFYHVE. At Thr15 the chain carries N-acetylthreonine. Thr15 carries the phosphothreonine modification. Helical transmembrane passes span 69–93, 134–155, 178–200, 255–275, and 291–312; these read LFEV…PHLA, LLGP…KDRN, KALY…RKIT, KPFA…LSYS, and WFNN…ASQA. Glu367 serves as a coordination point for [CaMn4O5] cluster. Residues 447–471 form a helical membrane-spanning segment; the sequence is RARAAAAGFEKGIDRDLEPVLYMNP.

The protein belongs to the PsbB/PsbC family. PsbC subfamily. PSII is composed of 1 copy each of membrane proteins PsbA, PsbB, PsbC, PsbD, PsbE, PsbF, PsbH, PsbI, PsbJ, PsbK, PsbL, PsbM, PsbT, PsbX, PsbY, PsbZ, Psb30/Ycf12, at least 3 peripheral proteins of the oxygen-evolving complex and a large number of cofactors. It forms dimeric complexes. The cofactor is Binds multiple chlorophylls and provides some of the ligands for the Ca-4Mn-5O cluster of the oxygen-evolving complex. It may also provide a ligand for a Cl- that is required for oxygen evolution. PSII binds additional chlorophylls, carotenoids and specific lipids..

It localises to the plastid. It is found in the chloroplast thylakoid membrane. Its function is as follows. One of the components of the core complex of photosystem II (PSII). It binds chlorophyll and helps catalyze the primary light-induced photochemical processes of PSII. PSII is a light-driven water:plastoquinone oxidoreductase, using light energy to abstract electrons from H(2)O, generating O(2) and a proton gradient subsequently used for ATP formation. The protein is Photosystem II CP43 reaction center protein of Hordeum vulgare (Barley).